A 75-amino-acid chain; its full sequence is Scuwaprin-a (75 aa).

The N-terminal stretch at 1 to 24 is a signal peptide; the sequence is MSSGGLLLLLGLLTLWAELTPVSG. The region spanning 27-72 is the WAP domain; that stretch reads RPKKPGLCPPRPQKPPCVKECKNDWSCPGQQKCCSYGCIDECRDPI. 4 cysteine pairs are disulfide-bonded: Cys-34/Cys-60, Cys-43/Cys-64, Cys-47/Cys-59, and Cys-53/Cys-68.

The protein belongs to the venom waprin family. In terms of tissue distribution, expressed by the venom gland.

The protein resides in the secreted. Its function is as follows. Damages membranes of susceptible bacteria. Has no hemolytic activity. Not toxic to mice. Does not inhibit the proteinases elastase and cathepsin G. In Oxyuranus scutellatus scutellatus (Australian taipan), this protein is Scuwaprin-a.